Consider the following 374-residue polypeptide: MSFHVNNKAVGDPLNSEDWRIKGYNPLTPPNLLQSEIPQTAKSRDTVFKAREEVIAIFQNKDAQKRLLVVIGPCSIHDPLAALEYCDRLMKLKEKYQDDLLIVMRSYLEKPRTTIGWKGLINDPDIDNSFKINKGLRISRQLFADLTEKGMPLASEMLDTISPQFLADMFSVGVIGARTTESQLHRELASGLSFPVGFKNGTDGTLDVAIDAIDSAKYPHHFLSVTKPGVVAIVGTIGNHDCFIILRGGRKGTNYDAKSIKEAREKLESEGMNPRLMIDCSHGNSEKNHMNQPKVVHAVAEQIEAGETAVIGVMIESNLKAGTQKVPKEGKAGLEYGMSITDACIDWKTTETVLAELAGAVAKRRTLLGQNGTY.

It belongs to the class-I DAHP synthase family.

It carries out the reaction D-erythrose 4-phosphate + phosphoenolpyruvate + H2O = 7-phospho-2-dehydro-3-deoxy-D-arabino-heptonate + phosphate. It participates in mycotoxin biosynthesis. In terms of biological role, nonribosomal peptide synthetase; part of the gene clusters that mediate the biosynthesis of AM-toxins, host-selective toxins (HSTs) causing Alternaria blotch on apple, a worldwide distributed disease. AM-toxins are cyclic depsipeptides containing the 3 residues 2-hydroxy-isovaleric acid (2-HIV), dehydroalanine, L-alanine which are common for all 3 AM-toxins I to III. The fourth precursor is L-alpha-amino-methoxyphenyl-valeric acid (L-Amv) for AM-toxin I, L-alpha-amino-phenyl-valeric acid (L-Apv) for AM-toxin II, and L-alpha-amino-hydroxyphenyl-valeric acid (L-Ahv) for AM-toxin III. AM-toxins have two target sites for affecting susceptible apple cells; they cause invagination of the plasma membrane and electrolyte loss and chloroplast disorganization. The non-ribosomal peptide synthetase AMT1 contains 4 catalytic modules and is responsible for activation of each residue in AM-toxin. The aldo-keto reductase AMT2 catalyzes the conversion of 2-keto-isovaleric acid (2-KIV) to 2-hydroxy-isovaleric acid (2-HIV), one of the precursor residues incorporated by AMT1 during AM-toxin biosynthesis, by reduction of its ketone to an alcohol. The cytochrome P450 monooxygenase AMT3 and the thioesterase AMT4 are also important for AM-toxin production, but their exact function within the AM-toxin biosynthesis are not known yet. Up to 21 proteins (including AMT1 to AMT4) are predicted to be involved in AM-toxin biosynthesis since their expression ishighly up-regulated in AM-toxin-producing cultures. The sequence is that of Phospho-2-dehydro-3-deoxyheptonate aldolase AMT16 from Alternaria alternata (Alternaria rot fungus).